A 209-amino-acid chain; its full sequence is V-type ATP synthase subunit D (209 aa).

Belongs to the V-ATPase D subunit family.

Functionally, produces ATP from ADP in the presence of a proton gradient across the membrane. The polypeptide is V-type ATP synthase subunit D (Anaeromyxobacter dehalogenans (strain 2CP-C)).